The following is a 201-amino-acid chain: MLKELRPAFVVLIALTALTGLAYPLAMTGAAQVLFPRQANGSLVTREGTVIGSALIGQNFTSARYFHGRPSATTDADPADATKTIPAPYNAANSMGSNLGPTNPALADRVKADLDALRAENPRDPVPVDLVTASGSGLDPHISPEAALFQVPRVARARGLNEGVVRRLVEENVEDRTLGLLGEPRVNVLALNLALDKARPQ.

The helical transmembrane segment at proline 7–methionine 27 threads the bilayer.

The protein belongs to the KdpC family. In terms of assembly, the system is composed of three essential subunits: KdpA, KdpB and KdpC.

It is found in the cell inner membrane. Its function is as follows. Part of the high-affinity ATP-driven potassium transport (or Kdp) system, which catalyzes the hydrolysis of ATP coupled with the electrogenic transport of potassium into the cytoplasm. This subunit acts as a catalytic chaperone that increases the ATP-binding affinity of the ATP-hydrolyzing subunit KdpB by the formation of a transient KdpB/KdpC/ATP ternary complex. This chain is Potassium-transporting ATPase KdpC subunit, found in Xanthobacter autotrophicus (strain ATCC BAA-1158 / Py2).